A 323-amino-acid chain; its full sequence is Beta-ketoacyl-[acyl-carrier-protein] synthase III (323 aa).

Catalysis depends on residues Cys-114 and His-250. The ACP-binding stretch occupies residues 251–255 (QANIR). Asn-280 is an active-site residue.

The protein belongs to the thiolase-like superfamily. FabH family. Homodimer.

The protein localises to the cytoplasm. The enzyme catalyses malonyl-[ACP] + acetyl-CoA + H(+) = 3-oxobutanoyl-[ACP] + CO2 + CoA. The protein operates within lipid metabolism; fatty acid biosynthesis. Functionally, catalyzes the condensation reaction of fatty acid synthesis by the addition to an acyl acceptor of two carbons from malonyl-ACP. Catalyzes the first condensation reaction which initiates fatty acid synthesis and may therefore play a role in governing the total rate of fatty acid production. Possesses both acetoacetyl-ACP synthase and acetyl transacylase activities. Its substrate specificity determines the biosynthesis of branched-chain and/or straight-chain of fatty acids. The chain is Beta-ketoacyl-[acyl-carrier-protein] synthase III from Ruegeria sp. (strain TM1040) (Silicibacter sp.).